The chain runs to 542 residues: Amino-acid acetyltransferase, mitochondrial (542 aa).

Residues 1–14 constitute a mitochondrion transit peptide; that stretch reads MLFRRLLTTKVGYH. Positions 368–534 constitute an N-acetyltransferase domain; sequence AGSAQLPAHK…LREYITYVRD (167 aa).

It belongs to the acetyltransferase family.

It is found in the mitochondrion. It catalyses the reaction L-glutamate + acetyl-CoA = N-acetyl-L-glutamate + CoA + H(+). The protein operates within amino-acid biosynthesis; L-arginine biosynthesis; N(2)-acetyl-L-ornithine from L-glutamate: step 1/4. In terms of biological role, N-acetylglutamate synthase involved in arginine biosynthesis. In Eremothecium gossypii (strain ATCC 10895 / CBS 109.51 / FGSC 9923 / NRRL Y-1056) (Yeast), this protein is Amino-acid acetyltransferase, mitochondrial (ARG2).